A 237-amino-acid chain; its full sequence is Demethylmenaquinone methyltransferase (237 aa).

S-adenosyl-L-methionine-binding positions include Thr-58, Asp-79, and 106–107; that span reads NA.

The protein belongs to the class I-like SAM-binding methyltransferase superfamily. MenG/UbiE family.

It catalyses the reaction a 2-demethylmenaquinol + S-adenosyl-L-methionine = a menaquinol + S-adenosyl-L-homocysteine + H(+). It participates in quinol/quinone metabolism; menaquinone biosynthesis; menaquinol from 1,4-dihydroxy-2-naphthoate: step 2/2. Its function is as follows. Methyltransferase required for the conversion of demethylmenaquinol (DMKH2) to menaquinol (MKH2). The chain is Demethylmenaquinone methyltransferase from Bacillus anthracis (strain A0248).